Reading from the N-terminus, the 295-residue chain is NADPH-dependent reductive aminase (295 aa).

An N-terminal signal peptide occupies residues 1–18 (MSKHIGIFGLGAMGTALA). 6–20 (GIFGLGAMGTALAAK) is a binding site for NADP(+).

The protein belongs to the HIBADH-related family. In terms of assembly, homodimer. NADPH is required as a cofactor.

In terms of biological role, NADPH-dependent reductive aminase that catalyzes the reductive coupling of a broad set of carbonyl compounds with a variety of primary and secondary amines. Possesses remarkably high activity for the reductive amination of ketones and amines, often with high stereoselectivity and in some cases with ketone:amine ratios as low as 1:1. The cofactor NADPH, the carbonyl compound and the amine are added to the enzyme in that sequence, followed by the release of product, NADP(+) being released at last. RedAm is also able to act in the reverse, oxidative direction and exhibits activity in the dehydrogenation of amines to yield imines. The highest activity is found for 1-methyl-tetrahydroquinoline and acyclic amines are also found to be transformed. The protein is NADPH-dependent reductive aminase of Aspergillus oryzae (strain ATCC 42149 / RIB 40) (Yellow koji mold).